Reading from the N-terminus, the 314-residue chain is Ribose-phosphate pyrophosphokinase (314 aa).

ATP contacts are provided by residues 37-39 and 96-97; these read DGE and RQ. The Mg(2+) site is built by H131 and D170. K194 is an active-site residue. Residues R196, D220, and 224-228 contribute to the D-ribose 5-phosphate site; that span reads DTGGT.

It belongs to the ribose-phosphate pyrophosphokinase family. Class I subfamily. Homohexamer. It depends on Mg(2+) as a cofactor.

The protein resides in the cytoplasm. The catalysed reaction is D-ribose 5-phosphate + ATP = 5-phospho-alpha-D-ribose 1-diphosphate + AMP + H(+). Its pathway is metabolic intermediate biosynthesis; 5-phospho-alpha-D-ribose 1-diphosphate biosynthesis; 5-phospho-alpha-D-ribose 1-diphosphate from D-ribose 5-phosphate (route I): step 1/1. Its function is as follows. Involved in the biosynthesis of the central metabolite phospho-alpha-D-ribosyl-1-pyrophosphate (PRPP) via the transfer of pyrophosphoryl group from ATP to 1-hydroxyl of ribose-5-phosphate (Rib-5-P). This chain is Ribose-phosphate pyrophosphokinase, found in Vibrio parahaemolyticus serotype O3:K6 (strain RIMD 2210633).